A 115-amino-acid polypeptide reads, in one-letter code: MNLIMVISINIILSSILILVAFWLPQLNSYTEKANPYECGFDPMSSARLPFSMKFFLVAITFLLFDLEIALLLPIPWAIQTYNINTMLLAAFILVSILALGLAYEWKQKGLEWTE.

3 helical membrane passes run 3-23 (LIMVISINIILSSILILVAFW), 55-75 (FFLVAITFLLFDLEIALLLPI), and 84-104 (INTMLLAAFILVSILALGLAY).

This sequence belongs to the complex I subunit 3 family. As to quaternary structure, core subunit of respiratory chain NADH dehydrogenase (Complex I) which is composed of 45 different subunits. Interacts with TMEM186. Interacts with TMEM242.

It localises to the mitochondrion inner membrane. It catalyses the reaction a ubiquinone + NADH + 5 H(+)(in) = a ubiquinol + NAD(+) + 4 H(+)(out). Functionally, core subunit of the mitochondrial membrane respiratory chain NADH dehydrogenase (Complex I) which catalyzes electron transfer from NADH through the respiratory chain, using ubiquinone as an electron acceptor. Essential for the catalytic activity of complex I. In Scotinomys teguina (Alston's brown mouse), this protein is NADH-ubiquinone oxidoreductase chain 3.